A 1188-amino-acid chain; its full sequence is DNA-directed RNA polymerase subunit beta (1188 aa).

This sequence belongs to the RNA polymerase beta chain family. As to quaternary structure, the RNAP catalytic core consists of 2 alpha, 1 beta, 1 beta' and 1 omega subunit. When a sigma factor is associated with the core the holoenzyme is formed, which can initiate transcription.

It catalyses the reaction RNA(n) + a ribonucleoside 5'-triphosphate = RNA(n+1) + diphosphate. Its function is as follows. DNA-dependent RNA polymerase catalyzes the transcription of DNA into RNA using the four ribonucleoside triphosphates as substrates. This chain is DNA-directed RNA polymerase subunit beta, found in Streptococcus pyogenes serotype M1.